Consider the following 115-residue polypeptide: Cobalt-zinc-cadmium resistance protein CzcI (115 aa).

Positions 1–20 (MRRFVLIFVLLILPFQFSWA) are cleaved as a signal peptide. Residues 93–102 (QHSSEFSSLN) are compositionally biased toward polar residues. A disordered region spans residues 93-115 (QHSSEFSSLNARAPDRPQWQRLA).

Its subcellular location is the periplasm. Its function is as follows. Component of the czc cation-efflux system that confers resistance to cobalt, zinc and cadmium. May have a regulatory function. This chain is Cobalt-zinc-cadmium resistance protein CzcI (czcI), found in Cupriavidus metallidurans (strain ATCC 43123 / DSM 2839 / NBRC 102507 / CH34) (Ralstonia metallidurans).